The sequence spans 523 residues: Peptide chain release factor 3 (523 aa).

The tr-type G domain occupies 10 to 277 (NKRRTFAIIS…QFVDLAPAPG (268 aa)). GTP contacts are provided by residues 19-26 (SHPDAGKT), 87-91 (DTPGH), and 141-144 (NKLD).

It belongs to the TRAFAC class translation factor GTPase superfamily. Classic translation factor GTPase family. PrfC subfamily.

It is found in the cytoplasm. Increases the formation of ribosomal termination complexes and stimulates activities of RF-1 and RF-2. It binds guanine nucleotides and has strong preference for UGA stop codons. It may interact directly with the ribosome. The stimulation of RF-1 and RF-2 is significantly reduced by GTP and GDP, but not by GMP. This Lactobacillus delbrueckii subsp. bulgaricus (strain ATCC BAA-365 / Lb-18) protein is Peptide chain release factor 3.